The primary structure comprises 386 residues: Hydrazine synthase subunit beta (386 aa).

The signal sequence occupies residues 1-34; that stretch reads MVIRRKMNKMIRKGMIGAVMLGAAVAISGGVATA.

In terms of assembly, part of the hydrazine synthase complex that forms an elongated dimer of heterotrimers composed of one alpha, one beta and one gamma subunit.

Its subcellular location is the anammoxosome. The protein operates within nitrogen metabolism. Functionally, component of the hydrazine synthase complex that catalyzes the condensation of nitric oxide (NO) with ammonium to form hydrazine. The beta subunit may play a role in modulating transport of the hydroxylamine intermediate through a tunnel between the gamma and alpha subunit's active site. Is involved in anaerobic ammonium oxidation (anammox), a biological process in which nitrite is used as the electron acceptor in the conversion of ammonium to dinitrogen gas (N2) and water; this bacterial process has a major role in the Earth's nitrogen cycle and has been estimated to synthesize up to 50% of the dinitrogen gas emitted into our atmosphere from the oceans. In Kuenenia stuttgartiensis, this protein is Hydrazine synthase subunit beta.